We begin with the raw amino-acid sequence, 671 residues long: DNA ligase (671 aa).

NAD(+) contacts are provided by residues 35–39 (DQQYD), 84–85 (SL), and Glu-113. The active-site N6-AMP-lysine intermediate is the Lys-115. Positions 136, 170, 285, and 309 each coordinate NAD(+). Zn(2+) is bound by residues Cys-403, Cys-406, Cys-421, and Cys-426. The region spanning 588-671 (TTQTIFTNKK…QIIENSQIKL (84 aa)) is the BRCT domain.

The protein belongs to the NAD-dependent DNA ligase family. LigA subfamily. It depends on Mg(2+) as a cofactor. Requires Mn(2+) as cofactor.

It catalyses the reaction NAD(+) + (deoxyribonucleotide)n-3'-hydroxyl + 5'-phospho-(deoxyribonucleotide)m = (deoxyribonucleotide)n+m + AMP + beta-nicotinamide D-nucleotide.. In terms of biological role, DNA ligase that catalyzes the formation of phosphodiester linkages between 5'-phosphoryl and 3'-hydroxyl groups in double-stranded DNA using NAD as a coenzyme and as the energy source for the reaction. It is essential for DNA replication and repair of damaged DNA. The sequence is that of DNA ligase from Onion yellows phytoplasma (strain OY-M).